Reading from the N-terminus, the 29-residue chain is Cytochrome b6-f complex subunit 8 (29 aa).

Residues 3 to 23 (IVSLAWAALMVVFTFSLSLVV) form a helical membrane-spanning segment.

The protein belongs to the PetN family. As to quaternary structure, the 4 large subunits of the cytochrome b6-f complex are cytochrome b6, subunit IV (17 kDa polypeptide, PetD), cytochrome f and the Rieske protein, while the 4 small subunits are PetG, PetL, PetM and PetN. The complex functions as a dimer.

The protein localises to the plastid. It localises to the chloroplast thylakoid membrane. In terms of biological role, component of the cytochrome b6-f complex, which mediates electron transfer between photosystem II (PSII) and photosystem I (PSI), cyclic electron flow around PSI, and state transitions. The protein is Cytochrome b6-f complex subunit 8 of Solanum bulbocastanum (Wild potato).